We begin with the raw amino-acid sequence, 837 residues long: Zinc fingers and homeoboxes protein 2 (837 aa).

The interval 1-41 is disordered; that stretch reads MASKRKSTTPCMVRTSQVVEQDVPEEVDRAKEKGIGTPQPD. The interval 27-77 is interaction with EFNB1; that stretch reads VDRAKEKGIGTPQPDVAKDCWAAELENSSKENEVIEVKSMGESQSKKLQGG. At T37 the chain carries Phosphothreonine. A Glycyl lysine isopeptide (Lys-Gly) (interchain with G-Cter in SUMO2) cross-link involves residue K64. C2H2-type zinc fingers lie at residues 78 to 101 and 110 to 133; these read YECK…DMQH and YVCA…SKFH. Residues 167–180 are compositionally biased toward low complexity; the sequence is TSGPGTGDSDSGIS. The disordered stretch occupies residues 167–203; that stretch reads TSGPGTGDSDSGISVSKTPIMKPGKPKADAKKVPKKP. Over residues 192 to 203 the composition is skewed to basic and acidic residues; it reads PKADAKKVPKKP. Residues 195 to 358 are required for homodimerization; it reads DAKKVPKKPE…PAQLAPTKVT (164 aa). 4 consecutive DNA-binding regions (homeobox) follow at residues 263–324, 439–501, 530–591, and 628–690; these read NTTK…WSPE, TPAS…IVHI, PQKF…EQAV, and SPSP…TVKW. Positions 263-446 are required for repressor activity; sequence NTTKYNSALD…PLTPASDRKK (184 aa). The interval 263–497 is required for interaction with NFYA; the sequence is NTTKYNSALD…SDHRYRCQRG (235 aa). The required for nuclear localization stretch occupies residues 317-446; the sequence is HGISWSPEEV…PLTPASDRKK (130 aa). Residues 404–445 are disordered; sequence GQKRPLVTPQAAPEPKRPHIAQVPEPPPKVANPPLTPASDRK. Pro residues predominate over residues 427-439; the sequence is PEPPPKVANPPLT. Residue K455 forms a Glycyl lysine isopeptide (Lys-Gly) (interchain with G-Cter in SUMO2) linkage. The interval 754 to 837 is disordered; it reads EPAKDCLPAK…DCVPAEAGQA (84 aa). Phosphoserine is present on residues S825 and S827.

This sequence belongs to the ZHX family. As to quaternary structure, homodimer (via homeobox domain 1). Heterodimer with ZHX1 (via homeobox domain 1). Heterodimer with ZHX3 (via homeobox domain 1). Heterodimerization with ZHX1 is not necessary for repressor activity. Interacts (via homeobox domain) with NFYA (via N-terminus). Interacts with EFNB1 intracellular domain peptide; the interaction enhances ZHX2 transcriptional repression activity.

The protein resides in the nucleus. Functionally, acts as a transcriptional repressor. Represses the promoter activity of the CDC25C gene stimulated by NFYA. May play a role in retinal development where it regulates the composition of bipolar cell populations, by promoting differentiation of bipolar OFF-type cells. In the brain, may promote maintenance and suppress differentiation of neural progenitor cells in the developing cortex. This is Zinc fingers and homeoboxes protein 2 (ZHX2) from Pongo abelii (Sumatran orangutan).